The following is a 307-amino-acid chain: Ribonuclease Z (307 aa).

Residues H63, H65, D67, H68, H143, D213, and H271 each coordinate Zn(2+). D67 functions as the Proton acceptor in the catalytic mechanism.

The protein belongs to the RNase Z family. Homodimer. Zn(2+) is required as a cofactor.

It carries out the reaction Endonucleolytic cleavage of RNA, removing extra 3' nucleotides from tRNA precursor, generating 3' termini of tRNAs. A 3'-hydroxy group is left at the tRNA terminus and a 5'-phosphoryl group is left at the trailer molecule.. Its function is as follows. Zinc phosphodiesterase, which displays some tRNA 3'-processing endonuclease activity. Probably involved in tRNA maturation, by removing a 3'-trailer from precursor tRNA. The protein is Ribonuclease Z of Lactococcus lactis subsp. cremoris (strain SK11).